Reading from the N-terminus, the 227-residue chain is Uracil-DNA glycosylase (227 aa).

The active-site Proton acceptor is aspartate 64.

It belongs to the uracil-DNA glycosylase (UDG) superfamily. UNG family.

The protein localises to the cytoplasm. The catalysed reaction is Hydrolyzes single-stranded DNA or mismatched double-stranded DNA and polynucleotides, releasing free uracil.. In terms of biological role, excises uracil residues from the DNA which can arise as a result of misincorporation of dUMP residues by DNA polymerase or due to deamination of cytosine. The protein is Uracil-DNA glycosylase of Erwinia tasmaniensis (strain DSM 17950 / CFBP 7177 / CIP 109463 / NCPPB 4357 / Et1/99).